A 254-amino-acid chain; its full sequence is Geranylgeranylglyceryl phosphate synthase (254 aa).

Mg(2+) contacts are provided by Asp28 and Ser57. Sn-glycerol 1-phosphate-binding positions include 176-182 (YLEAGSG), 207-208 (GG), and 229-230 (GT).

It belongs to the GGGP/HepGP synthase family. Group II subfamily. Mg(2+) serves as cofactor.

The protein resides in the cytoplasm. The enzyme catalyses sn-glycerol 1-phosphate + (2E,6E,10E)-geranylgeranyl diphosphate = sn-3-O-(geranylgeranyl)glycerol 1-phosphate + diphosphate. Its pathway is membrane lipid metabolism; glycerophospholipid metabolism. Prenyltransferase that catalyzes the transfer of the geranylgeranyl moiety of geranylgeranyl diphosphate (GGPP) to the C3 hydroxyl of sn-glycerol-1-phosphate (G1P). This reaction is the first ether-bond-formation step in the biosynthesis of archaeal membrane lipids. This is Geranylgeranylglyceryl phosphate synthase from Pyrococcus horikoshii (strain ATCC 700860 / DSM 12428 / JCM 9974 / NBRC 100139 / OT-3).